The sequence spans 440 residues: D-serine dehydratase (440 aa).

Lys-116 is modified (N6-(pyridoxal phosphate)lysine).

It belongs to the serine/threonine dehydratase family. DsdA subfamily. Monomer. Pyridoxal 5'-phosphate serves as cofactor.

It carries out the reaction D-serine = pyruvate + NH4(+). This Salmonella enteritidis PT4 (strain P125109) protein is D-serine dehydratase.